Reading from the N-terminus, the 1827-residue chain is MMRNKDKSQEEDSSLHSNASSRSASEEVSGSDSGSQSESEQGSEPGSGHGSESNSSSESSESQSESESESAGSKSQPVLPEAKEKPASKKERIADVKKMWEEYPDVYGVRRSNRSRQEPSRFNVKEEASSGSESGSPKRRGQRQLKKQEKWKQDPSEDEQEQGTSAESEAEQKKGKARRPVPRRTVPKPQVKKQPKIQRGKRKKQESSDDDDDDDEAPKRQTRRRAAKNVSYKEDDDFETDSDDLIEMTGEGGDEQQDNSETIEKVLDSRLGKKGATGASTTVYAVEANGDPSDDFDTEREEGEVQYLIKWKGWSYIHSTWESEDSLQQQKVKGLKKLENFKKKEDEVKQWLGKVSPEDVEYFSCQQELASELNKQYQIVERVIAVKTSKSTLGQTDFPAHSRKPAPSNEPEYLCKWMGLPYSECSWEDEALIGKKFQNCIDSFHSRNNSKTIPTRECKALKQRPRFVALKKQPAYLGGESLELRDYQLEGLNWLAHSWCKSNSVILADEMGLGKTIQTISFLSYLFHQHQLYGPFLIVVPLSTLTSWQREFEIWAPEINVVVYIGDLMSRNTIREYEWIHSQTKRLKFNALITTYEILLKDKTVLGSINWAFLGVDEAHRLKNDDSLLYKTLIDFKSNHRLLITGTPLQNSLKELWSLLHFIMPEKFEFWEDFEEDHGKGRENGYQSLHKVLEPFLLRRVKKDVEKSLPAKVEQILRVEMSALQKQYYKWILTRNYKALAKGTRGSTSGFLNIVMELKKCCNHCYLIKAPEDSERESGQEVLQSLIRSSGKLILLDKLLTRLRERGNRVLIFSQMVRMLDILAEYLTIKHYPFQRLDGSIKGEIRKQALDHFNADGSEDFCFLLSTRAGGLGINLASADTVVIFDSDWNPQNDLQAQARAHRIGQKKQVNIYRLVTKGTVEEEIIERAKKKMVLDHLVIQRMDTTGRTVLENNSGRSNSNPFNKEELTAILKFGAEDLFKEIEGEESEPQEMDIDEILRLAETRENEVSTSATDELLSQFKVANFATMEDEEELEERPHKDWDEIIPEEQRKKVEEEERQKELEEIYMLPRIRSSTKKAQTNDSDSDTESKRQAQRSSASESETDDSDDDKKPKRRGRPRSVRKDLVEGFTDAEIRRFIKAYKKFGLPLERLECIARDAELVDKSVADLKRLGELIHNSCVSAMQEYEEQLKESTSEGKGPGKRRGPTIKISGVQVNVKSIIQHEEEFEMLHKSIPVDPEEKKKYCLTCRVKAAHFDVEWGVEDDSRLLLGIYEHGYGNWELIKTDPELKLTDKILPVETDKKPQGKQLQTRVDYLLKLLRKGLEKKGTVASGEEAKLKKRKPRVKKENKAPRLKDEHGLEPASPRHSDNPSEEGEVKDDGLEKSPTKKKQKKKENKENKEKPVSSRKDREGDKERKKSKDKKEKVKGGDGKSSSKSKRSQGPVHITAGSEPVPIGEDEDDDLDQETFSICKERMRPVKKALKQLDKPDKGLSVQEQLEHTRNCLLKIGDRIAECLKAYSDQEHIKLWRRNLWIFVSKFTEFDARKLHKLYKMAHKKRSQEEEEQKKKDDSLGGKKPFRPEASGSSRDSLISQSHTSHNLHPQKPHLPASHGPQMHGHPRDNYSHPNKRHFSNADRGDWQRERKFNYGGGNSAPWGGDRHHQYEQHWYKDHHYGDRRHMDAHRSGSYRPNNMSRKRPYEQYNSDRDHRGHRDYYDRHHHDSKRRRSDDFRPQNYHQQDFRRMSDHRPTMGYHGQGPSDHYRSFHTDKLGEYKQPMPSLHTALSDPRSPPSQKSPHDSKSPLDHRSPLERSLEQKNNPDYNWNVRKT.

Positions 1-14 (MMRNKDKSQEEDSS) are enriched in basic and acidic residues. The disordered stretch occupies residues 1 to 264 (MMRNKDKSQE…EQQDNSETIE (264 aa)). Residues 15 to 75 (LHSNASSRSA…SESESAGSKS (61 aa)) show a composition bias toward low complexity. Basic and acidic residues-rich tracts occupy residues 81–101 (EAKE…KMWE), 115–128 (SRQE…KEEA), and 146–155 (KKQEKWKQDP). Over residues 175 to 204 (GKARRPVPRRTVPKPQVKKQPKIQRGKRKK) the composition is skewed to basic residues. 2 positions are modified to phosphoserine: S207 and S208. The segment covering 234-258 (EDDDFETDSDDLIEMTGEGGDEQQD) has biased composition (acidic residues). T240 is modified (phosphothreonine). S242 bears the Phosphoserine mark. Chromo domains are found at residues 261–353 (ETIE…QWLG) and 378–456 (QIVE…IPTR). One can recognise a Helicase ATP-binding domain in the interval 496-666 (AHSWCKSNSV…WSLLHFIMPE (171 aa)). Residue 509 to 516 (DEMGLGKT) participates in ATP binding. Residues 617 to 620 (DEAH) carry the DEAH box motif. Residues 795–946 (LLDKLLTRLR…HLVIQRMDTT (152 aa)) enclose the Helicase C-terminal domain. Disordered regions lie at residues 1030–1124 (EDEE…RSVR), 1329–1465 (GTVA…DDLD), 1556–1638 (HKKR…ADRG), and 1679–1827 (HMDA…VRKT). Residues 1037–1065 (ERPHKDWDEIIPEEQRKKVEEEERQKELE) are compositionally biased toward basic and acidic residues. Phosphoserine occurs at positions 1085, 1087, 1365, and 1386. The span at 1347–1371 (KKENKAPRLKDEHGLEPASPRHSDN) shows a compositional bias: basic and acidic residues. 2 stretches are compositionally biased toward basic and acidic residues: residues 1396 to 1431 (ENKE…KGGD) and 1565 to 1574 (EQKKKDDSLG). The segment at 1464-1566 (LDQETFSICK…KKRSQEEEEQ (103 aa)) is CHD1 helical C-terminal domain (CHCT). Polar residues predominate over residues 1584-1601 (SGSSRDSLISQSHTSHNL). 4 stretches are compositionally biased toward basic and acidic residues: residues 1697–1719 (RPYE…DRHH), 1738–1748 (QDFRRMSDHRP), 1759–1771 (DHYR…KLGE), and 1794–1813 (SPHD…RSLE). S1806 is subject to Phosphoserine.

Interacts with MYOD1. Interacts with histone H3.3. Widely expressed.

It is found in the nucleus. The catalysed reaction is ATP + H2O = ADP + phosphate + H(+). Its function is as follows. ATP-dependent chromatin-remodeling factor that specifically binds to the promoter of target genes, leading to chromatin remodeling, possibly by promoting deposition of histone H3.3. Involved in myogenesis via interaction with MYOD1: binds to myogenic gene regulatory sequences and mediates incorporation of histone H3.3 prior to the onset of myogenic gene expression, promoting their expression. This chain is Chromodomain-helicase-DNA-binding protein 2 (Chd2), found in Mus musculus (Mouse).